Here is a 216-residue protein sequence, read N- to C-terminus: MHIILMGPPGAGKGTQAVLLAGQEGIPHISTGDIFRAHMSQGTPLGKLAKEYVDAGKYVPDDVTNAMVRDRLAQPDCKKGFVLDGYPRTPEQARALDEMLAELGLALDAVINIDVPDELLVERAVGRRVCRSCGATYHVRFNPPREAGRCDRCGGELYQRSDDQEEKVAVRLNLYHSQTAPLLQFYKERGLVRTVRGDQPMDQVTADIKEAVRASR.

ATP is bound at residue 10–15; the sequence is GAGKGT. Residues 30–59 are NMP; sequence STGDIFRAHMSQGTPLGKLAKEYVDAGKYV. AMP-binding positions include T31, R36, 57-59, 85-88, and Q92; these read KYV and GYPR. Residues 126–163 are LID; sequence GRRVCRSCGATYHVRFNPPREAGRCDRCGGELYQRSDD. R127 lines the ATP pocket. Residues C130 and C133 each contribute to the Zn(2+) site. Residue 136–137 participates in ATP binding; sequence TY. 2 residues coordinate Zn(2+): C150 and C153. AMP is bound by residues R160 and R171. Q199 contacts ATP.

It belongs to the adenylate kinase family. As to quaternary structure, monomer.

The protein localises to the cytoplasm. The enzyme catalyses AMP + ATP = 2 ADP. The protein operates within purine metabolism; AMP biosynthesis via salvage pathway; AMP from ADP: step 1/1. In terms of biological role, catalyzes the reversible transfer of the terminal phosphate group between ATP and AMP. Plays an important role in cellular energy homeostasis and in adenine nucleotide metabolism. This Symbiobacterium thermophilum (strain DSM 24528 / JCM 14929 / IAM 14863 / T) protein is Adenylate kinase.